Here is a 396-residue protein sequence, read N- to C-terminus: Ornithine aminotransferase 2 (396 aa).

At K255 the chain carries N6-(pyridoxal phosphate)lysine.

Belongs to the class-III pyridoxal-phosphate-dependent aminotransferase family. OAT subfamily. Pyridoxal 5'-phosphate serves as cofactor.

It localises to the cytoplasm. The catalysed reaction is a 2-oxocarboxylate + L-ornithine = L-glutamate 5-semialdehyde + an L-alpha-amino acid. Its pathway is amino-acid biosynthesis; L-proline biosynthesis; L-glutamate 5-semialdehyde from L-ornithine: step 1/1. Functionally, catalyzes the interconversion of ornithine to glutamate semialdehyde. The protein is Ornithine aminotransferase 2 of Staphylococcus aureus (strain MRSA252).